Consider the following 215-residue polypeptide: Protein C' (215 aa).

Disordered stretches follow at residues 12–34 and 51–71; these read MPSF…SRSR and SEGT…QALP. Positions 15-22 are involved in self-degradation and in host STAT1 degradation; sequence FLKKILKL. Positions 51-65 are enriched in polar residues; that stretch reads SEGTEAGSTTPSTLP.

The protein belongs to the respirovirus protein C family. The different isoforms interact (via C-terminus) with unphosphorylated and phosphorylated human STAT1 (via N-terminus), favoring the formation of parallel STAT1 homodimers. The different isoforms do not interact with host STAT2. C protein interacts with L protein; this interaction has an inhibitory effect on viral transcription and replication. Y1 and Y2 proteins are produced not only by alternative initiation, but also by proteolytic cleavage of C'. Only alternative initiation is detected in vitro, whereas in vivo cleavage seems to be predominant.

It is found in the host cytoplasm. Functionally, the different products prevent the establishment of cellular antiviral state by blocking the interferon-alpha/beta (IFN-alpha/beta) and IFN-gamma signaling pathways. They inhibit IFN-alpha/beta induced tyrosine phosphorylation of STAT1 and STAT2. Blocking the IFN-alpha/beta pathway requires binding to STAT1 in the cytoplasm. They inhibit IFN-gamma induced serine phosphorylation of STAT1. Block the IFN-gamma pathway by binding to and stabilizing the parallel form of the STAT1 dimer, further inducing high-molecular-weight complex formation and inhibition of transcription by IFN-gamma. May also have a role in preventing the cell to enter apoptosis. Modulate regulation of viral transcription and replication. Overexpression inhibits the viral RNA polymerase. The absence of all C', C, Y1 and Y2 proteins leads to viral delayed growth. Plays an important role in virion particles release. Modulates virion shape. This chain is Protein C' (P/V/C), found in Sendai virus (strain Harris) (SeV).